Consider the following 155-residue polypeptide: 6,7-dimethyl-8-ribityllumazine synthase (155 aa).

Residues Trp23, 57–59 (AWE), and 81–83 (CVI) each bind 5-amino-6-(D-ribitylamino)uracil. 86-87 (DT) is a binding site for (2S)-2-hydroxy-3-oxobutyl phosphate. His89 acts as the Proton donor in catalysis. Asn114 is a 5-amino-6-(D-ribitylamino)uracil binding site. Arg128 is a binding site for (2S)-2-hydroxy-3-oxobutyl phosphate.

It belongs to the DMRL synthase family. Forms an icosahedral capsid composed of 60 subunits, arranged as a dodecamer of pentamers.

It catalyses the reaction (2S)-2-hydroxy-3-oxobutyl phosphate + 5-amino-6-(D-ribitylamino)uracil = 6,7-dimethyl-8-(1-D-ribityl)lumazine + phosphate + 2 H2O + H(+). It participates in cofactor biosynthesis; riboflavin biosynthesis; riboflavin from 2-hydroxy-3-oxobutyl phosphate and 5-amino-6-(D-ribitylamino)uracil: step 1/2. Catalyzes the formation of 6,7-dimethyl-8-ribityllumazine by condensation of 5-amino-6-(D-ribitylamino)uracil with 3,4-dihydroxy-2-butanone 4-phosphate. This is the penultimate step in the biosynthesis of riboflavin. This Stenotrophomonas maltophilia (strain K279a) protein is 6,7-dimethyl-8-ribityllumazine synthase.